The following is a 329-amino-acid chain: Interleukin-12 subunit beta (329 aa).

A signal peptide spans M1 to A22. An Ig-like C2-type domain is found at I23–K106. The cysteines at positions 50 and 90 are disulfide-linked. N135 and N223 each carry an N-linked (GlcNAc...) asparagine glycan. The 92-residue stretch at P238 to S329 folds into the Fibronectin type-III domain.

This sequence belongs to the IL-12B family. As to quaternary structure, heterodimer with IL12A; disulfide-linked. The heterodimer is known as interleukin IL-12. Heterodimer with IL23A; disulfide-linked. The heterodimer is known as interleukin IL-23. Also secreted as a monomer. Interacts with NBR1; this interaction promotes IL-12 secretion.

The protein resides in the secreted. Cytokine that can act as a growth factor for activated T and NK cells, enhance the lytic activity of NK/lymphokine-activated killer cells, and stimulate the production of IFN-gamma by resting PBMC. In terms of biological role, associates with IL23A to form the IL-23 interleukin, a heterodimeric cytokine which functions in innate and adaptive immunity. IL-23 may constitute with IL-17 an acute response to infection in peripheral tissues. IL-23 binds to a heterodimeric receptor complex composed of IL12RB1 and IL23R, activates the Jak-Stat signaling cascade, stimulates memory rather than naive T-cells and promotes production of pro-inflammatory cytokines. IL-23 induces autoimmune inflammation and thus may be responsible for autoimmune inflammatory diseases and may be important for tumorigenesis. This Felis catus (Cat) protein is Interleukin-12 subunit beta (IL12B).